A 324-amino-acid chain; its full sequence is 4-diphosphocytidyl-2-C-methyl-D-erythritol kinase (324 aa).

The active site involves lysine 11. ATP is bound at residue 108–118 (PIGAGLAGGST). The active site involves aspartate 150.

Belongs to the GHMP kinase family. IspE subfamily.

It catalyses the reaction 4-CDP-2-C-methyl-D-erythritol + ATP = 4-CDP-2-C-methyl-D-erythritol 2-phosphate + ADP + H(+). It functions in the pathway isoprenoid biosynthesis; isopentenyl diphosphate biosynthesis via DXP pathway; isopentenyl diphosphate from 1-deoxy-D-xylulose 5-phosphate: step 3/6. Catalyzes the phosphorylation of the position 2 hydroxy group of 4-diphosphocytidyl-2C-methyl-D-erythritol. The polypeptide is 4-diphosphocytidyl-2-C-methyl-D-erythritol kinase (Cyanothece sp. (strain PCC 7425 / ATCC 29141)).